Reading from the N-terminus, the 445-residue chain is CBL-interacting serine/threonine-protein kinase 5 (445 aa).

The Protein kinase domain occupies 12–267; that stretch reads YEMGRLLGKG…IPAIMRTPWL (256 aa). ATP-binding positions include 18–26 and Lys-41; that span reads LGKGTFAKV. Asp-135 serves as the catalytic Proton acceptor. The activation loop stretch occupies residues 153-182; that stretch reads DFGLSALPEQILQDGLLHTQCGTPAYVAPE. Ser-157 is subject to Phosphoserine. Thr-171 is subject to Phosphothreonine. Residues 307 to 332 form the NAF domain; sequence ISPKFFNAFEFISSMSSGFDLSSLFE. Positions 336 to 366 are PPI; it reads KVQSVFTSRSSATEVMEKIETVTKEMNMKVK.

The protein belongs to the protein kinase superfamily. CAMK Ser/Thr protein kinase family. SNF1 subfamily. It depends on Mn(2+) as a cofactor.

It catalyses the reaction L-seryl-[protein] + ATP = O-phospho-L-seryl-[protein] + ADP + H(+). The enzyme catalyses L-threonyl-[protein] + ATP = O-phospho-L-threonyl-[protein] + ADP + H(+). Its function is as follows. CIPK serine-threonine protein kinases interact with CBL proteins. Binding of a CBL protein to the regulatory NAF domain of CIPK protein lead to the activation of the kinase in a calcium-dependent manner. The sequence is that of CBL-interacting serine/threonine-protein kinase 5 (CIPK5) from Arabidopsis thaliana (Mouse-ear cress).